The chain runs to 116 residues: G antigen 2D (116 aa).

Residues 1-116 are disordered; that stretch reads MSWRGRSTYR…PEEGEKQSQC (116 aa). 2 stretches are compositionally biased toward acidic residues: residues 31–44 and 86–95; these read FSDEVEPATPEEGE and ECEDGPDGQE. The segment covering 102 to 116 has biased composition (basic and acidic residues); it reads EEVKTPEEGEKQSQC.

This sequence belongs to the GAGE family. In terms of tissue distribution, not expressed in normal tissues, except in testis, but expressed by a large proportion of tumors of various histological origins.

The chain is G antigen 2D (GAGE2D) from Homo sapiens (Human).